The primary structure comprises 539 residues: Squalene monooxygenase SE1 (539 aa).

Transmembrane regions (helical) follow at residues 22–42 and 71–91; these read LLID…FLLL and IAGS…ALAY. FAD is bound by residues 84-85, 104-105, arginine 112, arginine 183, valine 199, aspartate 361, and methionine 374; these read VA and ER. Residues 472–492 form a helical membrane-spanning segment; the sequence is LFLHFFAVAIYGVGRLLIPFP.

The protein belongs to the squalene monooxygenase family. The cofactor is FAD. As to expression, mostly expressed in flower buds and leaves, and, to a lower extent, at high levels thought, in roots and petioles. In petioles, preferentially observed in vascular bundle tissue (phloem cells and parenchymatous cells near xylem) and resin ducts.

It localises to the microsome membrane. Its subcellular location is the endoplasmic reticulum membrane. The enzyme catalyses squalene + reduced [NADPH--hemoprotein reductase] + O2 = (S)-2,3-epoxysqualene + oxidized [NADPH--hemoprotein reductase] + H2O + H(+). Its pathway is terpene metabolism; lanosterol biosynthesis; lanosterol from farnesyl diphosphate: step 2/3. Its function is as follows. Component of the triterpene saponins (e.g. ginsenosides or panaxosides) and phytosterols biosynthetic pathways. Catalyzes the first oxygenation step in sterol biosynthesis and is suggested to be one of the rate-limiting enzymes in this pathway. This Panax ginseng (Korean ginseng) protein is Squalene monooxygenase SE1.